Consider the following 549-residue polypeptide: Glucoamylase, intracellular sporulation-specific (549 aa).

Residue Trp198 participates in substrate binding. The active-site Proton acceptor is Asp261. Glu264 serves as the catalytic Proton donor.

It belongs to the glycosyl hydrolase 15 family.

It carries out the reaction Hydrolysis of terminal (1-&gt;4)-linked alpha-D-glucose residues successively from non-reducing ends of the chains with release of beta-D-glucose.. This chain is Glucoamylase, intracellular sporulation-specific (SGA1), found in Saccharomyces cerevisiae (strain ATCC 204508 / S288c) (Baker's yeast).